We begin with the raw amino-acid sequence, 5875 residues long: Probable E3 ubiquitin-protein ligase DDB_G0283893 (5875 aa).

15 disordered regions span residues 17-64 (DNNN…QPPE), 164-185 (NNNN…QSNN), 232-276 (DSNN…TTTS), 302-342 (PSFK…CGNG), 642-693 (TTTT…SPPI), 716-740 (SIRS…TTNA), 1081-1101 (ITPT…TSIP), 1291-1367 (DGWE…KEST), 1806-1851 (QESE…SSPP), 1952-1982 (KKPS…KDEV), 2008-2036 (EDED…DDEE), 2109-2203 (KALK…TGSG), 2893-2930 (DSDD…TNDS), 3083-3119 (TSPS…SGSN), and 3195-3214 (LLPP…DNTN). Low complexity predominate over residues 18 to 52 (NNNNNNNNNNNNNNNNNNNNNNNNNNNSNNNNNKN). The segment covering 237–249 (DNKENKKEDKESS) has biased composition (basic and acidic residues). 3 stretches are compositionally biased toward low complexity: residues 250–276 (KPIA…TTTS), 317–333 (TSTI…ITQP), and 642–656 (TTTT…TTTT). Residues 657–669 (NESIPMETTRSST) are compositionally biased toward polar residues. A compositionally biased stretch (low complexity) spans 670 to 693 (PIPIVNNNNNNNDSKSNSKKSPPI). Residues 716-725 (SIRSSSNKVN) show a composition bias toward polar residues. The segment covering 728–740 (TPKSSTTTTTTNA) has biased composition (low complexity). The segment covering 1297–1330 (FNDDDDEEEDEEEEEEMDEDDSENDEDEDSEESE) has biased composition (acidic residues). Residues 1300 to 1328 (DDDEEEDEEEEEEMDEDDSENDEDEDSEE) adopt a coiled-coil conformation. Composition is skewed to low complexity over residues 1347-1363 (TTTT…TATT) and 1838-1851 (SNSS…SSPP). Residues 1963–1977 (GGCHHSNHHHHHHHS) show a composition bias toward basic residues. The UBR-type zinc finger occupies 2042–2113 (KVCTYTFTKN…KGNPCKALKP (72 aa)). 2 stretches are compositionally biased toward low complexity: residues 2118–2168 (PPKQ…TNTN) and 2178–2203 (SSSS…TGSG). The segment covering 2893-2903 (DSDDSDDEFPT) has biased composition (acidic residues). Positions 2908-2917 (VTSSGLSTSA) are enriched in low complexity. The span at 3201-3211 (SSSNENVVDND) shows a compositional bias: low complexity. Residues 3226 to 3280 (EVLFSCDLCNINPITGKRWNCSNCGDFDLCNQCYQNPEKDHPKDHIFKEFIIDEP) form a ZZ-type zinc finger. The Zn(2+) site is built by C3231, C3234, C3246, C3249, C3255, C3258, H3266, and H3270. 3 disordered regions span residues 3282-3312 (KDGD…QDDS), 3326-3359 (LNNN…PTTN), and 3754-3776 (SSTS…SNDI). Low complexity-rich tracts occupy residues 3295–3307 (QQQK…LQQD) and 3327–3358 (NNNN…TPTT). In terms of domain architecture, UIM spans 3313-3332 (EYDEELKIAISMSLNNNNNN). Residues 3754–3763 (SSTSQDTQQE) show a composition bias toward polar residues. A compositionally biased stretch (low complexity) spans 3764 to 3774 (SSNNNNNNNSN). Residues 4118 to 4146 (IENQEDHKRAIQTIEKESENAHKKYQRLI) adopt a coiled-coil conformation. Low complexity predominate over residues 4182-4222 (NTSTNSTGSNNQSINSSSGNISTNSSSSSSSSFGISNQSSS). Disordered stretches follow at residues 4182–4237 (NTST…GGVI), 4295–4323 (FISG…RQCP), and 4616–4671 (KILS…FDND). A compositionally biased stretch (gly residues) spans 4223–4236 (GNGGGGVGSGGGGV). A compositionally biased stretch (low complexity) spans 4308–4317 (QQQQQQQQQQ). Residues 4585-4618 (QIQQQIALQQQQIQQQIQQQQQQLNESVSGLKIL) adopt a coiled-coil conformation. Composition is skewed to low complexity over residues 4619-4635 (SPSS…ATGS) and 4645-4659 (SSGS…ISSS). Residues 5357 to 5870 (PALPFVLVLL…EYLLKLYKSV (514 aa)) form a UBR4 E3 catalytic module region. A HemiRING-type zinc finger spans residues 5476-5620 (GFTCMVCREG…WVNLNNISRV (145 aa)). The Zn(2+) site is built by C5479, C5482, H5554, and C5557. One can recognise a UZI domain in the interval 5623–5870 (PKFRILSHDL…EYLLKLYKSV (248 aa)). A coiled-coil region spans residues 5819–5846 (QVDVKELLNCFENELKEFQDEMEFFDDE).

It belongs to the UBR4 family.

Its pathway is protein modification; protein ubiquitination. In terms of biological role, probable E3 ubiquitin-protein ligase. The protein is Probable E3 ubiquitin-protein ligase DDB_G0283893 of Dictyostelium discoideum (Social amoeba).